The chain runs to 292 residues: 4-hydroxy-tetrahydrodipicolinate synthase (292 aa).

Pyruvate is bound at residue T45. The active-site Proton donor/acceptor is the Y133. K162 acts as the Schiff-base intermediate with substrate in catalysis. Position 204 (I204) interacts with pyruvate.

Belongs to the DapA family. In terms of assembly, homotetramer; dimer of dimers.

The protein localises to the cytoplasm. The enzyme catalyses L-aspartate 4-semialdehyde + pyruvate = (2S,4S)-4-hydroxy-2,3,4,5-tetrahydrodipicolinate + H2O + H(+). It functions in the pathway amino-acid biosynthesis; L-lysine biosynthesis via DAP pathway; (S)-tetrahydrodipicolinate from L-aspartate: step 3/4. Catalyzes the condensation of (S)-aspartate-beta-semialdehyde [(S)-ASA] and pyruvate to 4-hydroxy-tetrahydrodipicolinate (HTPA). This is 4-hydroxy-tetrahydrodipicolinate synthase from Oleidesulfovibrio alaskensis (strain ATCC BAA-1058 / DSM 17464 / G20) (Desulfovibrio alaskensis).